A 206-amino-acid polypeptide reads, in one-letter code: Thiamine-phosphate synthase (206 aa).

4-amino-2-methyl-5-(diphosphooxymethyl)pyrimidine is bound by residues 36–40 and Asn-68; that span reads QLRAK. The Mg(2+) site is built by Asp-69 and Asp-88. Residue Ser-105 participates in 4-amino-2-methyl-5-(diphosphooxymethyl)pyrimidine binding. A 2-[(2R,5Z)-2-carboxy-4-methylthiazol-5(2H)-ylidene]ethyl phosphate-binding site is contributed by 131 to 133; that stretch reads TPT. Lys-134 is a 4-amino-2-methyl-5-(diphosphooxymethyl)pyrimidine binding site. Residue Gly-162 participates in 2-[(2R,5Z)-2-carboxy-4-methylthiazol-5(2H)-ylidene]ethyl phosphate binding.

The protein belongs to the thiamine-phosphate synthase family. Mg(2+) is required as a cofactor.

It catalyses the reaction 2-[(2R,5Z)-2-carboxy-4-methylthiazol-5(2H)-ylidene]ethyl phosphate + 4-amino-2-methyl-5-(diphosphooxymethyl)pyrimidine + 2 H(+) = thiamine phosphate + CO2 + diphosphate. The enzyme catalyses 2-(2-carboxy-4-methylthiazol-5-yl)ethyl phosphate + 4-amino-2-methyl-5-(diphosphooxymethyl)pyrimidine + 2 H(+) = thiamine phosphate + CO2 + diphosphate. It carries out the reaction 4-methyl-5-(2-phosphooxyethyl)-thiazole + 4-amino-2-methyl-5-(diphosphooxymethyl)pyrimidine + H(+) = thiamine phosphate + diphosphate. It functions in the pathway cofactor biosynthesis; thiamine diphosphate biosynthesis; thiamine phosphate from 4-amino-2-methyl-5-diphosphomethylpyrimidine and 4-methyl-5-(2-phosphoethyl)-thiazole: step 1/1. Functionally, condenses 4-methyl-5-(beta-hydroxyethyl)thiazole monophosphate (THZ-P) and 2-methyl-4-amino-5-hydroxymethyl pyrimidine pyrophosphate (HMP-PP) to form thiamine monophosphate (TMP). The sequence is that of Thiamine-phosphate synthase from Thermus thermophilus (strain ATCC BAA-163 / DSM 7039 / HB27).